We begin with the raw amino-acid sequence, 48 residues long: U-actitoxin-Cgg3 (48 aa).

Disulfide bonds link Cys5/Cys41, Cys7/Cys33, and Cys23/Cys42. The residue at position 46 (Ser46) is a Serine amide. Positions 47–48 (GR) are cleaved as a propeptide — removed in mature form.

Belongs to the sea anemone type 3 (BDS) potassium channel toxin family.

It localises to the secreted. Its function is as follows. Neurotoxin that induces paralysis when injected into crabs. May function in antimicrobial activity as it displays inhibitory activity towards the B.licheniformis enzyme subtilisin A (SUBTA) and the recombinant S.maltophilia protease 1 (rStmPr1) enzyme. Also displays inhibitory activity against various proteases including the porcine pancreatic elastase (PPE) and proteinase K (PK). This chain is U-actitoxin-Cgg3, found in Condylactis gigantea (Giant Caribbean anemone).